Consider the following 826-residue polypeptide: Protein FAM171B (826 aa).

The signal sequence occupies residues 1-32 (MARLCRRVPCTLLLGLAVVLLKARLVPAAARA). Topologically, residues 33–353 (ELSRSDLSLI…DSKDITAYHT (321 aa)) are extracellular. The segment at 52-71 (QQQQQKQLEEAEEERTEVPG) is disordered. N-linked (GlcNAc...) asparagine glycosylation is found at Asn108, Asn113, Asn213, and Asn268. The chain crosses the membrane as a helical span at residues 354-374 (VFLTAILGGTIVIVIGFFAVL). At 375–826 (LCYCRDKCGT…REERPLIPIN (452 aa)) the chain is on the cytoplasmic side. 3 disordered regions span residues 429–448 (NAKN…AETE), 474–493 (QNNY…GSKQ), and 774–826 (HPGE…IPIN). The segment covering 438 to 448 (QKKEPSKAETE) has biased composition (basic and acidic residues). Positions 474–486 (QNNYSRNPTQSLE) are enriched in polar residues. Over residues 774–786 (HPGEESPGRKSTV) the composition is skewed to basic and acidic residues. The residue at position 794 (Ser794) is a Phosphoserine. Residues 805–826 (AKRDSKTNIWKKREERPLIPIN) are compositionally biased toward basic and acidic residues.

The protein belongs to the FAM171 family.

The protein resides in the cytoplasmic granule. The protein localises to the membrane. The protein is Protein FAM171B (FAM171B) of Homo sapiens (Human).